The following is a 608-amino-acid chain: Afamin (608 aa).

Residues 1–21 (MRHLKLTGFIFFLLSLTESLA) form the signal peptide. 3 consecutive Albumin domains span residues 22–210 (LPTK…APIT), 211–403 (QYLK…KFNE), and 404–599 (TTER…KTGD). An N-linked (GlcNAc...) asparagine glycan is attached at asparagine 33. Disulfide bonds link cysteine 77–cysteine 86, cysteine 99–cysteine 114, cysteine 113–cysteine 124, cysteine 148–cysteine 193, cysteine 224–cysteine 270, cysteine 269–cysteine 277, cysteine 289–cysteine 303, cysteine 302–cysteine 313, cysteine 340–cysteine 385, and cysteine 384–cysteine 393. The N-linked (GlcNAc...) asparagine glycan is linked to asparagine 109. Asparagine 153 carries N-linked (GlcNAc...) asparagine glycosylation. Residues 215–319 (ALSSYQRNVC…RADCIINANK (105 aa)) form a binding pocket for hydrophobic ligands region. Asparagine 402 carries an N-linked (GlcNAc...) asparagine glycan. Intrachain disulfides connect cysteine 416–cysteine 462, cysteine 461–cysteine 470, cysteine 483–cysteine 499, cysteine 498–cysteine 509, and cysteine 580–cysteine 589. Asparagine 488 carries an N-linked (GlcNAc...) asparagine glycan. Residues 585-608 (KPEACFSPESSKTGDVSQDAEKQR) are disordered.

This sequence belongs to the ALB/AFP/VDB family. Forms a 1:1 complex with Wnt family members; interacts with WNT1, WNT2B, WNT3, WNT3A, WNT5A, WNT7A, WNT7B, WNT8, WNT9A, WNT9B, WNT10A and WNT10B. In terms of processing, N-glycosylated; more than 90% of the glycans are sialylated.

Its subcellular location is the secreted. In terms of biological role, functions as a carrier for hydrophobic molecules in body fluids. Essential for the solubility and activity of lipidated Wnt family members, including WNT1, WNT2B, WNT3, WNT3A, WNT5A, WNT7A, WNT7B, WNT8, WNT9A, WNT9B, WNT10A and WNT10B. Binds vitamin E. May transport vitamin E in body fluids under conditions where the lipoprotein system is not sufficient. May be involved in the transport of vitamin E across the blood-brain barrier. The polypeptide is Afamin (Afm) (Rattus norvegicus (Rat)).